The primary structure comprises 196 residues: Guanylate kinase (196 aa).

One can recognise a Guanylate kinase-like domain in the interval 7–191 (RNIVLLVGPS…AAEEIEKIIL (185 aa)). 14–21 (GPSGVGKG) contributes to the ATP binding site.

It belongs to the guanylate kinase family.

The protein localises to the cytoplasm. It carries out the reaction GMP + ATP = GDP + ADP. Functionally, essential for recycling GMP and indirectly, cGMP. In Mycoplasmopsis pulmonis (strain UAB CTIP) (Mycoplasma pulmonis), this protein is Guanylate kinase.